A 697-amino-acid chain; its full sequence is tRNA 5-methylaminomethyl-2-thiouridine biosynthesis bifunctional protein MnmC (697 aa).

Residues 1–275 are tRNA (mnm(5)s(2)U34)-methyltransferase; that stretch reads MTAKPHKSCQ…KPATLAAIDH (275 aa). Residues 280–697 form an FAD-dependent cmnm(5)s(2)U34 oxidoreductase region; that stretch reads VGGGLASANL…LRKLLKGKAL (418 aa).

The protein in the N-terminal section; belongs to the methyltransferase superfamily. tRNA (mnm(5)s(2)U34)-methyltransferase family. This sequence in the C-terminal section; belongs to the DAO family. FAD is required as a cofactor.

The protein localises to the cytoplasm. The catalysed reaction is 5-aminomethyl-2-thiouridine(34) in tRNA + S-adenosyl-L-methionine = 5-methylaminomethyl-2-thiouridine(34) in tRNA + S-adenosyl-L-homocysteine + H(+). In terms of biological role, catalyzes the last two steps in the biosynthesis of 5-methylaminomethyl-2-thiouridine (mnm(5)s(2)U) at the wobble position (U34) in tRNA. Catalyzes the FAD-dependent demodification of cmnm(5)s(2)U34 to nm(5)s(2)U34, followed by the transfer of a methyl group from S-adenosyl-L-methionine to nm(5)s(2)U34, to form mnm(5)s(2)U34. This chain is tRNA 5-methylaminomethyl-2-thiouridine biosynthesis bifunctional protein MnmC, found in Shewanella sp. (strain ANA-3).